Consider the following 294-residue polypeptide: Glutamate-binding protein GluB (294 aa).

The first 26 residues, 1–26 (MSHKRMFTRLAAATSAAVLAGITLTA), serve as a signal peptide directing secretion. C27 is lipidated: N-palmitoyl cysteine. Residue C27 is the site of S-diacylglycerol cysteine attachment.

It belongs to the bacterial solute-binding protein 3 family. As to quaternary structure, the complex is composed of two ATP-binding proteins (GluA), two transmembrane proteins (GluC and GluD) and a solute-binding protein (GluB).

It is found in the cell membrane. Part of the ABC transporter complex GluABCD involved in glutamate uptake. Binds glutamate with a high affinity. This Corynebacterium efficiens (strain DSM 44549 / YS-314 / AJ 12310 / JCM 11189 / NBRC 100395) protein is Glutamate-binding protein GluB.